The following is a 540-amino-acid chain: Glucose-6-phosphate isomerase (540 aa).

The active-site Proton donor is the Glu-350. Residues His-381 and Lys-503 contribute to the active site.

The protein belongs to the GPI family.

The protein localises to the cytoplasm. The enzyme catalyses alpha-D-glucose 6-phosphate = beta-D-fructose 6-phosphate. It participates in carbohydrate biosynthesis; gluconeogenesis. It functions in the pathway carbohydrate degradation; glycolysis; D-glyceraldehyde 3-phosphate and glycerone phosphate from D-glucose: step 2/4. Functionally, catalyzes the reversible isomerization of glucose-6-phosphate to fructose-6-phosphate. The sequence is that of Glucose-6-phosphate isomerase from Paraburkholderia phymatum (strain DSM 17167 / CIP 108236 / LMG 21445 / STM815) (Burkholderia phymatum).